Consider the following 208-residue polypeptide: Large ribosomal subunit protein uL4 (208 aa).

A disordered region spans residues 49–78; that stretch reads HKAKTRAEVRGGGKKPFRQKGTGNARQGST. The segment covering 69-78 has biased composition (polar residues); the sequence is GTGNARQGST.

The protein belongs to the universal ribosomal protein uL4 family. As to quaternary structure, part of the 50S ribosomal subunit.

Its function is as follows. One of the primary rRNA binding proteins, this protein initially binds near the 5'-end of the 23S rRNA. It is important during the early stages of 50S assembly. It makes multiple contacts with different domains of the 23S rRNA in the assembled 50S subunit and ribosome. Functionally, forms part of the polypeptide exit tunnel. The chain is Large ribosomal subunit protein uL4 from Chlorobaculum tepidum (strain ATCC 49652 / DSM 12025 / NBRC 103806 / TLS) (Chlorobium tepidum).